A 141-amino-acid polypeptide reads, in one-letter code: Transcription antitermination protein NusB (141 aa).

The protein belongs to the NusB family.

Functionally, involved in transcription antitermination. Required for transcription of ribosomal RNA (rRNA) genes. Binds specifically to the boxA antiterminator sequence of the ribosomal RNA (rrn) operons. The protein is Transcription antitermination protein NusB of Neisseria gonorrhoeae (strain ATCC 700825 / FA 1090).